A 604-amino-acid polypeptide reads, in one-letter code: Sulfite reductase [NADPH] flavoprotein alpha-component (604 aa).

Positions 66–204 constitute a Flavodoxin-like domain; that stretch reads VTVLSASQTG…SANAWTDNIA (139 aa). FMN contacts are provided by residues 72–77, 119–122, and 155–164; these read SQTGNA, STQG, and LGDSSYPNFC. The 215-residue stretch at 239-453 folds into the FAD-binding FR-type domain; sequence AAPFPAALLA…VERNDGFRLP (215 aa). FAD contacts are provided by residues Thr-327, Gln-361, 391-394, 409-411, and 424-427; these read RLYS, TVG, and GGAS. NADP(+)-binding positions include 524–525, 530–534, and Asp-566; these read SR and KIYVQ. Tyr-604 contacts FAD.

The protein belongs to the NADPH-dependent sulphite reductase flavoprotein subunit CysJ family. This sequence in the N-terminal section; belongs to the flavodoxin family. It in the C-terminal section; belongs to the flavoprotein pyridine nucleotide cytochrome reductase family. As to quaternary structure, alpha(8)-beta(8). The alpha component is a flavoprotein, the beta component is a hemoprotein. FAD serves as cofactor. It depends on FMN as a cofactor.

It catalyses the reaction hydrogen sulfide + 3 NADP(+) + 3 H2O = sulfite + 3 NADPH + 4 H(+). It participates in sulfur metabolism; hydrogen sulfide biosynthesis; hydrogen sulfide from sulfite (NADPH route): step 1/1. Functionally, component of the sulfite reductase complex that catalyzes the 6-electron reduction of sulfite to sulfide. This is one of several activities required for the biosynthesis of L-cysteine from sulfate. The flavoprotein component catalyzes the electron flow from NADPH -&gt; FAD -&gt; FMN to the hemoprotein component. This Neisseria meningitidis serogroup B (strain ATCC BAA-335 / MC58) protein is Sulfite reductase [NADPH] flavoprotein alpha-component.